Reading from the N-terminus, the 128-residue chain is Natriuretic peptides A (128 aa).

The interval 36 to 84 is disordered; the sequence is QVASEQNEEAGAVLSALPEVPSWPGEAGPAQREGGALGRGPWDSSDRSA. A propeptide spanning residues 68-78 is cleaved from the precursor; sequence EGGALGRGPWD. Position 104 is a phosphoserine (Ser104). A disulfide bond links Cys105 and Cys121. The important for degradation of atrial natriuretic peptide by IDE stretch occupies residues 122-126; that stretch reads NSFRY.

Belongs to the natriuretic peptide family. In terms of assembly, homodimer; disulfide-linked antiparallel dimer. Post-translationally, the precursor molecule is proteolytically cleaved by CORIN at Arg-98 to produce atrial natriuretic peptide. Undergoes further proteolytic cleavage by unknown proteases to give rise to long-acting natriuretic peptide, vessel dilator and kaliuretic peptide. Additional processing gives rise to the auriculin and atriopeptin peptides. In the kidneys, alternative processing by an unknown protease results in the peptide urodilatin. In terms of processing, cleavage by MME initiates degradation of the factor and thereby regulates its activity. Degraded by IDE (in vitro). During IDE degradation, the resulting products can temporarily stimulate NPR2 to produce cGMP, before the fragments are completely degraded and inactivated by IDE (in vitro). Degraded by IDE. Post-translationally, phosphorylation on Ser-104 decreases vasorelaxant activity.

It is found in the secreted. The protein resides in the perikaryon. It localises to the cell projection. Functionally, hormone that plays a key role in mediating cardio-renal homeostasis, and is involved in vascular remodeling and regulating energy metabolism. Acts by specifically binding and stimulating NPR1 to produce cGMP, which in turn activates effector proteins, such as PRKG1, that drive various biological responses. Regulates vasodilation, natriuresis, diuresis and aldosterone synthesis and is therefore essential for regulating blood pressure, controlling the extracellular fluid volume and maintaining the fluid-electrolyte balance. Also involved in inhibiting cardiac remodeling and cardiac hypertrophy by inducing cardiomyocyte apoptosis and attenuating the growth of cardiomyocytes and fibroblasts. Plays a role in female pregnancy by promoting trophoblast invasion and spiral artery remodeling in uterus, and thus prevents pregnancy-induced hypertension. In adipose tissue, acts in various cGMP- and PKG-dependent pathways to regulate lipid metabolism and energy homeostasis. This includes up-regulating lipid metabolism and mitochondrial oxygen utilization by activating the AMP-activated protein kinase (AMPK), and increasing energy expenditure by acting via MAPK11 to promote the UCP1-dependent thermogenesis of brown adipose tissue. Binds the clearance receptor NPR3 which removes the hormone from circulation. Its function is as follows. May have a role in cardio-renal homeostasis through regulation of natriuresis, diuresis, vasodilation, and inhibiting aldosterone synthesis. In vitro, promotes the production of cGMP and induces vasodilation. May promote natriuresis, at least in part, by enhancing prostaglandin E2 synthesis resulting in the inhibition of renal Na+-K+-ATPase. However reports on the involvement of this peptide in mammal blood volume and blood pressure homeostasis are conflicting; according to a report, in vivo it is not sufficient to activate cGMP and does not inhibit collecting duct transport nor effect diuresis and natriuresis. Appears to bind to specific receptors that are distinct from the receptors bound by atrial natriuretic peptide and vessel dilator. Possibly enhances protein excretion in urine by decreasing proximal tubular protein reabsorption. In terms of biological role, may have a role in cardio-renal homeostasis through regulation of natriuresis, diuresis, and vasodilation. In vitro, promotes the production of cGMP and induces vasodilation. May promote natriuresis, at least in part, by enhancing prostaglandin E2 synthesis resulting in the inhibition of renal Na+-K+-ATPase. However reports on the involvement of this peptide in mammal blood volume and blood pressure homeostasis are conflicting; according to a report it is not sufficient to activate cGMP and does not inhibit collecting duct transport nor effect diuresis and natriuresis. Appears to bind to specific receptors that are distinct from the receptors bound by the atrial natriuretic and long-acting natriuretic peptides. Possibly functions in protein excretion in urine by maintaining the integrity of the proximal tubules and enhancing protein excretion by decreasing proximal tubular protein reabsorption. May have a role in cardio-renal homeostasis through regulation of diuresis and inhibiting aldosterone synthesis. In vitro, promotes the production of cGMP and induces vasodilation. May promote natriuresis, at least in part, by enhancing prostaglandin E2 synthesis resulting in the inhibition of renal Na+-K+-ATPase. May have a role in potassium excretion but not sodium excretion (natriuresis). Possibly enhances protein excretion in urine by decreasing proximal tubular protein reabsorption. Functionally, hormone produced in the kidneys that appears to be important for maintaining cardio-renal homeostasis. Mediates vasodilation, natriuresis and diuresis primarily in the renal system, in order to maintain the extracellular fluid volume and control the fluid-electrolyte balance. Specifically binds and stimulates cGMP production by renal transmembrane receptors, likely NPR1. Urodilatin not ANP, may be the natriuretic peptide responsible for the regulation of sodium and water homeostasis in the kidney. Its function is as follows. May have a role in cardio-renal homeostasis through regulation of natriuresis and vasodilation. In vivo promotes natriuresis and in vitro, vasodilates renal artery strips. In terms of biological role, may have a role in cardio-renal homeostasis through regulation of regulation of natriuresis and vasodilation. In vivo promotes natriuresis. In vitro, vasodilates intestinal smooth muscle but not smooth muscle strips. May have a role in cardio-renal homeostasis through regulation of natriuresis and vasodilation. In vivo promotes natriuresis. In vitro, selectively vasodilates intestinal and vascular smooth muscle strips. Functionally, may have a role in cardio-renal homeostasis through regulation of natriuresis and vasodilation. In vivo promotes natriuresis. In vitro, selectively vasodilates intestinal smooth muscle but not vascular smooth muscle strips. The chain is Natriuretic peptides A (NPPA) from Cavia porcellus (Guinea pig).